A 545-amino-acid chain; its full sequence is Chaperonin GroEL 1 (545 aa).

Residues 29–32, 86–90, G413, 477–479, and D493 each bind ATP; these read TLGP, DGTTT, and NAA.

This sequence belongs to the chaperonin (HSP60) family. Forms a cylinder of 14 subunits composed of two heptameric rings stacked back-to-back. Interacts with the co-chaperonin GroES.

It is found in the cytoplasm. It catalyses the reaction ATP + H2O + a folded polypeptide = ADP + phosphate + an unfolded polypeptide.. Together with its co-chaperonin GroES, plays an essential role in assisting protein folding. The GroEL-GroES system forms a nano-cage that allows encapsulation of the non-native substrate proteins and provides a physical environment optimized to promote and accelerate protein folding. The sequence is that of Chaperonin GroEL 1 from Arthrobacter sp. (strain FB24).